We begin with the raw amino-acid sequence, 142 residues long: Large ribosomal subunit protein uL13 (142 aa).

The protein belongs to the universal ribosomal protein uL13 family. Part of the 50S ribosomal subunit.

Its function is as follows. This protein is one of the early assembly proteins of the 50S ribosomal subunit, although it is not seen to bind rRNA by itself. It is important during the early stages of 50S assembly. In Shigella sonnei (strain Ss046), this protein is Large ribosomal subunit protein uL13.